The sequence spans 302 residues: MSNNSSTSFKNQKPVEPIGIIPRSIIRTFNRFIIQLFPNSNALVIQEFRISRYQVFVSIQCLLSLIFIPLIITFLSKTFVFLPLTEYVWNTQTDDIFLNSYLEKEALSELQDFEEQLYFDYFVSPNTYETPNWASYQISTDSSSQLESSFNNFPEILKSEIQKKTLELATHYNQKSIESLTNLFSDFVSFGTFALLVIILKPQIIILKSFLIESIYSLSDTIKSFLLILGTDLLVGFHSPRGWELFLEFVLNRFGFPHDENFIFLFVATLPVLLDTVFKYWIFRYLNKISPSTVATYHAMLE.

Helical transmembrane passes span 55 to 75 (VFVS…ITFL), 187 to 207 (FVSF…IIIL), 225 to 247 (FLLI…ELFL), and 262 to 282 (FIFL…KYWI).

It belongs to the CemA family.

The protein resides in the plastid. It localises to the chloroplast inner membrane. The catalysed reaction is K(+)(in) + H(+)(out) = K(+)(out) + H(+)(in). In terms of biological role, contributes to K(+)/H(+) antiport activity by supporting proton efflux to control proton extrusion and homeostasis in chloroplasts in a light-dependent manner to modulate photosynthesis. Prevents excessive induction of non-photochemical quenching (NPQ) under continuous-light conditions. Indirectly promotes efficient inorganic carbon uptake into chloroplasts. In Tupiella akineta (Green alga), this protein is Potassium/proton antiporter CemA.